The following is a 511-amino-acid chain: Histidine ammonia-lyase (511 aa).

A cross-link (5-imidazolinone (Ala-Gly)) is located at residues 142-144 (ASG). S143 is modified (2,3-didehydroalanine (Ser)).

This sequence belongs to the PAL/histidase family. Post-translationally, contains an active site 4-methylidene-imidazol-5-one (MIO), which is formed autocatalytically by cyclization and dehydration of residues Ala-Ser-Gly.

The protein localises to the cytoplasm. It catalyses the reaction L-histidine = trans-urocanate + NH4(+). Its pathway is amino-acid degradation; L-histidine degradation into L-glutamate; N-formimidoyl-L-glutamate from L-histidine: step 1/3. The chain is Histidine ammonia-lyase from Chelativorans sp. (strain BNC1).